Reading from the N-terminus, the 189-residue chain is Potassium-transporting ATPase KdpC subunit (189 aa).

Residues 6 to 26 form a helical membrane-spanning segment; it reads PAILFFIVFTILCGGVYPAVV.

This sequence belongs to the KdpC family. The system is composed of three essential subunits: KdpA, KdpB and KdpC.

It localises to the cell inner membrane. Functionally, part of the high-affinity ATP-driven potassium transport (or Kdp) system, which catalyzes the hydrolysis of ATP coupled with the electrogenic transport of potassium into the cytoplasm. This subunit acts as a catalytic chaperone that increases the ATP-binding affinity of the ATP-hydrolyzing subunit KdpB by the formation of a transient KdpB/KdpC/ATP ternary complex. This Geotalea uraniireducens (strain Rf4) (Geobacter uraniireducens) protein is Potassium-transporting ATPase KdpC subunit.